Here is a 1016-residue protein sequence, read N- to C-terminus: C2 domain-containing protein 5 (1016 aa).

Residues 1–109 enclose the C2 domain; that stretch reads MPGKLKVKIV…EAATVISGWF (109 aa). The Ca(2+) site is built by aspartate 19, aspartate 26, aspartate 76, aspartate 78, serine 81, and aspartate 84. A Phosphoserine; by PKB/AKT2 modification is found at serine 197. A phosphoserine mark is found at serine 200 and serine 260. The segment at 265 to 330 is disordered; the sequence is LKEIPFNEDP…SGSAGKEGGP (66 aa). Residues 274–289 show a composition bias toward polar residues; sequence PNPNTHSSGPSTPLKN. Residues 290-318 show a composition bias toward low complexity; the sequence is QTYSFSPSKSYSRQSSSSDTDLSLTPKTG. Phosphoserine occurs at positions 293, 295, 304, 305, and 306. Position 317 is a phosphothreonine (threonine 317). The span at 319–328 shows a compositional bias: gly residues; sequence MGSGSAGKEG. Serine 323 is modified (phosphoserine). The residue at position 601 (threonine 601) is a Phosphothreonine. Residues 636-668 form a disordered region; it reads VSEEMIGSPIPEPRQRSRLLRSQSESSDEVTEL. Serine 643, serine 657, serine 659, serine 661, and serine 662 each carry phosphoserine. Threonine 666 carries the phosphothreonine modification. 3 positions are modified to phosphoserine: serine 671, serine 817, and serine 869.

The cofactor is Ca(2+). Post-translationally, phosphorylated on Ser-197 by active myristoylated kinase AKT2; insulin-stimulated phosphorylation by AKT2 regulates SLC2A4/GLUT4 translocation into the plasma membrane. Expressed in liver, muscle and fat.

The protein localises to the cytoplasmic vesicle membrane. It localises to the cytoplasm. Its subcellular location is the cell cortex. The protein resides in the cell membrane. It is found in the cell projection. The protein localises to the ruffle. Functionally, required for insulin-stimulated glucose transport and glucose transporter SLC2A4/GLUT4 translocation from intracellular glucose storage vesicle (GSV) to the plasma membrane (PM) in adipocytes. Binds phospholipid membranes in a calcium-dependent manner and is necessary for the optimal membrane fusion between SLC2A4/GLUT4 GSV and the PM. This is C2 domain-containing protein 5 (C2cd5) from Mus musculus (Mouse).